The following is a 215-amino-acid chain: High mobility group protein B1 (215 aa).

1–10 lines the heparin pocket; sequence MGKGDPKKPR. The tract at residues 1 to 97 is sufficient for interaction with HAVCR2; sequence MGKGDPKKPR…KFKDPNAPKR (97 aa). N6-acetyllysine occurs at positions 3, 7, 8, and 12. Residues 3-15 are LPS binding (delipidated); the sequence is KGDPKKPRGKMSS. A DNA-binding region (HMG box 1) is located at residues 9-79; it reads PRGKMSSYAF…RYEREMKTYI (71 aa). Cysteine 23 is modified (cysteine sulfonic acid (-SO3H); alternate). Cysteine 23 and cysteine 45 are joined by a disulfide. The tract at residues 27 to 43 is NLS 1; sequence HKKKHPDASVNFSEFSK. The short motif at 27–43 is the Nuclear localization signal (NLS) 1 element; that stretch reads HKKKHPDASVNFSEFSK. 3 positions are modified to N6-acetyllysine: lysine 28, lysine 29, and lysine 30. Lysine 28 participates in a covalent cross-link: Isoglutamyl lysine isopeptide (Lys-Gln) (interchain with Q-?). Position 35 is a phosphoserine (serine 35). Lysine 43 carries the post-translational modification N6-acetyllysine. Isoglutamyl lysine isopeptide (Lys-Gln) (interchain with Q-?) cross-links involve residues lysine 43 and lysine 44. Cysteine 45 is modified (cysteine sulfonic acid (-SO3H); alternate). An Isoglutamyl lysine isopeptide (Lys-Gln) (interchain with Q-?) cross-link involves residue lysine 68. The disordered stretch occupies residues 76–95; that stretch reads KTYIPPKGETKKKFKDPNAP. An LPS binding (Lipid A) region spans residues 80 to 96; sequence PPKGETKKKFKDPNAPK. Over residues 83 to 94 the composition is skewed to basic and acidic residues; it reads GETKKKFKDPNA. The segment at 89–108 is cytokine-stimulating activity; the sequence is FKDPNAPKRPPSAFFLFCSE. Residue lysine 90 is modified to N6-acetyllysine. The HMG box 2 DNA-binding region spans 95 to 163; that stretch reads PKRPPSAFFL…KYEKDIAAYR (69 aa). Serine 100 carries the phosphoserine modification. Cysteine 106 carries the post-translational modification Cysteine sulfonic acid (-SO3H). Lysine 127, lysine 128, lysine 141, lysine 172, lysine 173, lysine 177, and lysine 180 each carry N6-acetyllysine. The interval 150–183 is binding to AGER/RAGE; the sequence is KLKEKYEKDIAAYRAKGKPDAAKKGVVKAEKSKK. Residues 161 to 179 show a composition bias toward basic and acidic residues; that stretch reads AYRAKGKPDAAKKGVVKAE. The disordered stretch occupies residues 161–215; the sequence is AYRAKGKPDAAKKGVVKAEKSKKKKEEEEDEEDEEDEEEEEDEEDEDEEEDDDDE. Positions 178–184 are NLS 2; sequence AEKSKKK. The short motif at 178–184 is the Nuclear localization signal (NLS) 2 element; that stretch reads AEKSKKK. An Isoglutamyl lysine isopeptide (Lys-Gln) (interchain with Q-?) cross-link involves residue lysine 180. At serine 181 the chain carries ADP-ribosylserine. 4 positions are modified to N6-acetyllysine: lysine 182, lysine 183, lysine 184, and lysine 185. Isoglutamyl lysine isopeptide (Lys-Gln) (interchain with Q-?) cross-links involve residues lysine 182, lysine 183, and lysine 184. Positions 187–215 are enriched in acidic residues; sequence EEEDEEDEEDEEEEEDEEDEDEEEDDDDE.

Belongs to the HMGB family. In terms of assembly, interacts (fully reduced HMGB1) with CXCL12; probably in a 1:2 ratio involving two molecules of CXCL12, each interacting with one HMG box of HMGB1; inhibited by glycyrrhizin. Associates with the TLR4:LY96 receptor complex. Component of the RAG complex composed of core components RAG1 and RAG2, and associated component HMGB1 or HMGB2. Interacts (in cytoplasm upon starvation) with BECN1; inhibits the interaction of BECN1 and BCL2 leading to promotion of autophagy. Interacts with KPNA1; involved in nuclear import. Interacts with SREBF1, TLR2, TLR4, TLR9, PTPRZ1, APEX1, FEN1, POLB, TERT. Interacts with IL1B, AGER, MSH2, XPA, XPC, HNF1A, TP53. Interacts with CD24; the probable CD24:SIGLEC10 complex is proposed to inhibit HGMB1-mediated tissue damage immune response. Interacts with THBD; prevents HGMB1 interaction with ACER/RAGE and inhibits HGMB1 pro-inflammatory activity. Interacts with HAVCR2; impairs HMGB1 binding to B-DNA and likely HMGB1-mediated innate immune response. Interacts with XPO1; mediating nuclear export. Interacts with receptor RAGE/AGER. In terms of processing, phosphorylated at serine residues. Phosphorylation in both NLS regions is required for cytoplasmic translocation followed by secretion. Acetylated on multiple sites upon stimulation with LPS. Acetylation on lysine residues in the nuclear localization signals (NLS 1 and NLS 2) leads to cytoplasmic localization and subsequent secretion. Acetylation on Lys-3 results in preferential binding to DNA ends and impairs DNA bending activity. Post-translationally, reduction/oxidation of cysteine residues Cys-23, Cys-45 and Cys-106 and a possible intramolecular disulfide bond involving Cys-23 and Cys-45 give rise to different redox forms with specific functional activities in various cellular compartments: 1- fully reduced HMGB1 (HMGB1C23hC45hC106h), 2- disulfide HMGB1 (HMGB1C23-C45C106h) and 3- sulfonyl HMGB1 (HMGB1C23soC45soC106so). In terms of processing, poly-ADP-ribosylated by PARP1 when secreted following stimulation with LPS. In vitro cleavage by CASP1 is liberating a HMG box 1-containing peptide which may mediate immunogenic activity; the peptide antagonizes apoptosis-induced immune tolerance. Can be proteolytically cleaved by a thrombin:thrombomodulin complex; reduces binding to heparin and pro-inflammatory activities. Post-translationally, forms covalent cross-links mediated by transglutaminase TGM2, between a glutamine and the epsilon-amino group of a lysine residue, forming homopolymers and heteropolymers.

It is found in the nucleus. The protein localises to the chromosome. It localises to the cytoplasm. The protein resides in the secreted. Its subcellular location is the cell membrane. It is found in the endosome. The protein localises to the endoplasmic reticulum-Golgi intermediate compartment. Its function is as follows. Multifunctional redox sensitive protein with various roles in different cellular compartments. In the nucleus is one of the major chromatin-associated non-histone proteins and acts as a DNA chaperone involved in replication, transcription, chromatin remodeling, V(D)J recombination, DNA repair and genome stability. Proposed to be an universal biosensor for nucleic acids. Promotes host inflammatory response to sterile and infectious signals and is involved in the coordination and integration of innate and adaptive immune responses. In the cytoplasm functions as a sensor and/or chaperone for immunogenic nucleic acids implicating the activation of TLR9-mediated immune responses, and mediates autophagy. Acts as a danger-associated molecular pattern (DAMP) molecule that amplifies immune responses during tissue injury. Released to the extracellular environment can bind DNA, nucleosomes, IL-1 beta, CXCL12, AGER isoform 2/sRAGE, lipopolysaccharide (LPS) and lipoteichoic acid (LTA), and activates cells through engagement of multiple surface receptors. In the extracellular compartment fully reduced HMGB1 (released by necrosis) acts as a chemokine, disulfide HMGB1 (actively secreted) as a cytokine, and sulfonyl HMGB1 (released from apoptotic cells) promotes immunological tolerance. Has proangiogenic activity. May be involved in platelet activation. Binds to phosphatidylserine and phosphatidylethanolamide. Bound to RAGE mediates signaling for neuronal outgrowth. May play a role in accumulation of expanded polyglutamine (polyQ) proteins. In terms of biological role, nuclear functions are attributed to fully reduced HGMB1. Associates with chromatin and binds DNA with a preference to non-canonical DNA structures such as single-stranded DNA, DNA-containing cruciforms or bent structures, supercoiled DNA and ZDNA. Can bent DNA and enhance DNA flexibility by looping thus providing a mechanism to promote activities on various gene promoters by enhancing transcription factor binding and/or bringing distant regulatory sequences into close proximity. May be involved in nucleotide excision repair (NER), mismatch repair (MMR) and base excision repair (BER) pathways, and double strand break repair such as non-homologous end joining (NHEJ). Involved in V(D)J recombination by acting as a cofactor of the RAG complex: acts by stimulating cleavage and RAG protein binding at the 23 bp spacer of conserved recombination signal sequences (RSS). In vitro can displace histone H1 from highly bent DNA. Can restructure the canonical nucleosome leading to relaxation of structural constraints for transcription factor-binding. Enhances binding of sterol regulatory element-binding proteins (SREBPs) such as SREBF1 to their cognate DNA sequences and increases their transcriptional activities. Facilitates binding of TP53 to DNA. May be involved in mitochondrial quality control and autophagy in a transcription-dependent fashion implicating HSPB1. Can modulate the activity of the telomerase complex and may be involved in telomere maintenance. Functionally, in the cytoplasm proposed to dissociate the BECN1:BCL2 complex via competitive interaction with BECN1 leading to autophagy activation. Can protect BECN1 and ATG5 from calpain-mediated cleavage and thus proposed to control their proautophagic and proapoptotic functions and to regulate the extent and severity of inflammation-associated cellular injury. In myeloid cells has a protective role against endotoxemia and bacterial infection by promoting autophagy. Involved in endosomal translocation and activation of TLR9 in response to CpG-DNA in macrophages. In the extracellular compartment (following either active secretion or passive release) involved in regulation of the inflammatory response. Fully reduced HGMB1 (which subsequently gets oxidized after release) in association with CXCL12 mediates the recruitment of inflammatory cells during the initial phase of tissue injury; the CXCL12:HMGB1 complex triggers CXCR4 homodimerization. Induces the migration of monocyte-derived immature dendritic cells and seems to regulate adhesive and migratory functions of neutrophils implicating AGER/RAGE and ITGAM. Can bind to various types of DNA and RNA including microbial unmethylated CpG-DNA to enhance the innate immune response to nucleic acids. Proposed to act in promiscuous DNA/RNA sensing which cooperates with subsequent discriminative sensing by specific pattern recognition receptors. Promotes extracellular DNA-induced AIM2 inflammasome activation implicating AGER/RAGE. Disulfide HMGB1 binds to transmembrane receptors, such as AGER/RAGE, TLR2, TLR4 and probably TREM1, thus activating their signal transduction pathways. Mediates the release of cytokines/chemokines such as TNF, IL-1, IL-6, IL-8, CCL2, CCL3, CCL4 and CXCL10. Promotes secretion of interferon-gamma by macrophage-stimulated natural killer (NK) cells in concert with other cytokines like IL-2 or IL-12. TLR4 is proposed to be the primary receptor promoting macrophage activation and signaling through TLR4 seems to implicate LY96/MD-2. In bacterial LPS- or LTA-mediated inflammatory responses binds to the endotoxins and transfers them to CD14 for signaling to the respective TLR4:LY96 and TLR2 complexes. Contributes to tumor proliferation by association with ACER/RAGE. Can bind to IL1-beta and signals through the IL1R1:IL1RAP receptor complex. Binding to class A CpG activates cytokine production in plasmacytoid dendritic cells implicating TLR9, MYD88 and AGER/RAGE and can activate autoreactive B cells. Via HMGB1-containing chromatin immune complexes may also promote B cell responses to endogenous TLR9 ligands through a B-cell receptor (BCR)-dependent and ACER/RAGE-independent mechanism. Inhibits phagocytosis of apoptotic cells by macrophages; the function is dependent on poly-ADP-ribosylation and involves binding to phosphatidylserine on the cell surface of apoptotic cells. In adaptive immunity may be involved in enhancing immunity through activation of effector T-cells and suppression of regulatory T (TReg) cells. In contrast, without implicating effector or regulatory T-cells, required for tumor infiltration and activation of T-cells expressing the lymphotoxin LTA:LTB heterotrimer thus promoting tumor malignant progression. Also reported to limit proliferation of T-cells. Released HMGB1:nucleosome complexes formed during apoptosis can signal through TLR2 to induce cytokine production. Involved in induction of immunological tolerance by apoptotic cells; its pro-inflammatory activities when released by apoptotic cells are neutralized by reactive oxygen species (ROS)-dependent oxidation specifically on Cys-106. During macrophage activation by activated lymphocyte-derived self apoptotic DNA (ALD-DNA) promotes recruitment of ALD-DNA to endosomes. The polypeptide is High mobility group protein B1 (HMGB1) (Canis lupus familiaris (Dog)).